The chain runs to 94 residues: Fungal defensin scedosporisin-2 (94 aa).

The signal sequence occupies residues 1–25 (MKFSNISIAALFTILASTAMAAPAA). Residues 26–56 (DSPDSIVAREPAPVEETYEAPSGLEKRGFGC) constitute a propeptide that is removed on maturation. Beta-D-GlcNAc-(1-&gt;4)-Mur2Ac(oyl-L-Ala-gamma-D-Glu-L-Lys-D-Ala-D-Ala)-di-trans,octa-cis-undecaprenyl diphosphate-binding residues include Phe-54, Gly-55, and Cys-56. Cystine bridges form between Cys-56/Cys-78, Cys-63/Cys-91, and Cys-67/Cys-93. The interaction site with membrane interface stretch occupies residues 57–60 (PGSE). His-66 is a beta-D-GlcNAc-(1-&gt;4)-Mur2Ac(oyl-L-Ala-gamma-D-Glu-L-Lys-D-Ala-D-Ala)-di-trans,octa-cis-undecaprenyl diphosphate binding site. The segment at 83 to 90 (IPFVGRPR) is interaction site with membrane interface. Cys-91 lines the beta-D-GlcNAc-(1-&gt;4)-Mur2Ac(oyl-L-Ala-gamma-D-Glu-L-Lys-D-Ala-D-Ala)-di-trans,octa-cis-undecaprenyl diphosphate pocket.

It belongs to the invertebrate defensin family.

The protein localises to the secreted. It is found in the target cell membrane. Functionally, antibacterial peptide potently active against Gram-positive bacteria. May act by selectively inhibiting peptidoglycan biosynthesis through complex formation with the cell wall precursor lipid II (1:1 molar ratio) thus inhibiting cell wall synthesis. Shows remarkably activity against resistant isolates such as methicillin-resistant Staphylococcus aureus (MRSA) and vancomycin-resistant Enterococci (VRE) at the concentration of micromolar level. Does not act by destroying the membrane integrity, which is consistent with its nonamphiphilic architecture. Acts more rapidly than vancomycin. Shows low hemolysis and cytotoxicity and high serum stability. In vivo, is as efficient as vancomycin to protect mouse peritonitis models from MRSA infections. The protein is Fungal defensin scedosporisin-2 of Pseudallescheria apiosperma (Scedosporium apiospermum).